The following is a 468-amino-acid chain: Glutamine synthetase (468 aa).

The GS beta-grasp domain occupies 14–98 (HDVKYVDLRF…ILCDVYEPST (85 aa)). One can recognise a GS catalytic domain in the interval 106–468 (PRGIAKAAEK…PIEYKMYYSV (363 aa)). Mg(2+) is bound by residues glutamate 131 and glutamate 133. Glutamate 209 is an ATP binding site. The Mg(2+) site is built by glutamate 214 and glutamate 221. L-glutamate-binding positions include 265-266 (NG) and glycine 266. Histidine 270 provides a ligand contact to Mg(2+). Residues 272–274 (HQS) and serine 274 each bind ATP. Positions 322, 328, and 340 each coordinate L-glutamate. The ATP site is built by arginine 340, arginine 345, and lysine 353. Glutamate 358 contacts Mg(2+). Arginine 360 is an L-glutamate binding site. Tyrosine 398 is modified (O-AMP-tyrosine).

It belongs to the glutamine synthetase family. In terms of assembly, oligomer of 12 subunits arranged in the form of two hexameric ring. Requires Mg(2+) as cofactor.

It is found in the cytoplasm. It catalyses the reaction L-glutamate + NH4(+) + ATP = L-glutamine + ADP + phosphate + H(+). With respect to regulation, the activity of this enzyme could be controlled by adenylation under conditions of abundant glutamine. Its function is as follows. Catalyzes the ATP-dependent biosynthesis of glutamine from glutamate and ammonia. This Azospirillum brasilense protein is Glutamine synthetase.